The following is a 200-amino-acid chain: Recombination protein RecR (200 aa).

A C4-type zinc finger spans residues cysteine 59 to cysteine 74. Residues arginine 82–proline 177 enclose the Toprim domain.

This sequence belongs to the RecR family.

Functionally, may play a role in DNA repair. It seems to be involved in an RecBC-independent recombinational process of DNA repair. It may act with RecF and RecO. The polypeptide is Recombination protein RecR (Caulobacter vibrioides (strain ATCC 19089 / CIP 103742 / CB 15) (Caulobacter crescentus)).